Consider the following 67-residue polypeptide: DNA-directed RNA polymerase subunit omega (67 aa).

This sequence belongs to the RNA polymerase subunit omega family. As to quaternary structure, the RNAP catalytic core consists of 2 alpha, 1 beta, 1 beta' and 1 omega subunit. When a sigma factor is associated with the core the holoenzyme is formed, which can initiate transcription.

It catalyses the reaction RNA(n) + a ribonucleoside 5'-triphosphate = RNA(n+1) + diphosphate. Its function is as follows. Promotes RNA polymerase assembly. Latches the N- and C-terminal regions of the beta' subunit thereby facilitating its interaction with the beta and alpha subunits. This Polaromonas sp. (strain JS666 / ATCC BAA-500) protein is DNA-directed RNA polymerase subunit omega.